We begin with the raw amino-acid sequence, 121 residues long: Auxin-responsive protein SAUR32 (121 aa).

It belongs to the ARG7 family. In terms of tissue distribution, expressed in roots, leaves and stems.

It is found in the nucleus. The protein resides in the cytoplasm. May play a role in the apical hook development. This Arabidopsis thaliana (Mouse-ear cress) protein is Auxin-responsive protein SAUR32.